Consider the following 176-residue polypeptide: ATP synthase subunit b (176 aa).

A helical membrane pass occupies residues 18 to 38 (GVEWGTVIVTVITFAILLALL).

The protein belongs to the ATPase B chain family. As to quaternary structure, F-type ATPases have 2 components, F(1) - the catalytic core - and F(0) - the membrane proton channel. F(1) has five subunits: alpha(3), beta(3), gamma(1), delta(1), epsilon(1). F(0) has three main subunits: a(1), b(2) and c(10-14). The alpha and beta chains form an alternating ring which encloses part of the gamma chain. F(1) is attached to F(0) by a central stalk formed by the gamma and epsilon chains, while a peripheral stalk is formed by the delta and b chains.

The protein resides in the cell membrane. Its function is as follows. F(1)F(0) ATP synthase produces ATP from ADP in the presence of a proton or sodium gradient. F-type ATPases consist of two structural domains, F(1) containing the extramembraneous catalytic core and F(0) containing the membrane proton channel, linked together by a central stalk and a peripheral stalk. During catalysis, ATP synthesis in the catalytic domain of F(1) is coupled via a rotary mechanism of the central stalk subunits to proton translocation. Functionally, component of the F(0) channel, it forms part of the peripheral stalk, linking F(1) to F(0). In Staphylococcus haemolyticus (strain JCSC1435), this protein is ATP synthase subunit b.